We begin with the raw amino-acid sequence, 156 residues long: Small ribosomal subunit protein uS17A (156 aa).

Ser2 bears the N-acetylserine mark. Residues Lys15, Lys46, Lys56, Lys57, Lys79, Lys96, Lys105, Lys133, Lys141, and Lys148 each participate in a glycyl lysine isopeptide (Lys-Gly) (interchain with G-Cter in ubiquitin) cross-link.

Belongs to the universal ribosomal protein uS17 family. Component of the small ribosomal subunit (SSU). Mature yeast ribosomes consist of a small (40S) and a large (60S) subunit. The 40S small subunit contains 1 molecule of ribosomal RNA (18S rRNA) and 33 different proteins (encoded by 57 genes). The large 60S subunit contains 3 rRNA molecules (25S, 5.8S and 5S rRNA) and 46 different proteins (encoded by 81 genes). In terms of processing, N-terminally acetylated by acetyltransferase NatA.

Its subcellular location is the cytoplasm. Its function is as follows. Component of the ribosome, a large ribonucleoprotein complex responsible for the synthesis of proteins in the cell. The small ribosomal subunit (SSU) binds messenger RNAs (mRNAs) and translates the encoded message by selecting cognate aminoacyl-transfer RNA (tRNA) molecules. The large subunit (LSU) contains the ribosomal catalytic site termed the peptidyl transferase center (PTC), which catalyzes the formation of peptide bonds, thereby polymerizing the amino acids delivered by tRNAs into a polypeptide chain. The nascent polypeptides leave the ribosome through a tunnel in the LSU and interact with protein factors that function in enzymatic processing, targeting, and the membrane insertion of nascent chains at the exit of the ribosomal tunnel. This is Small ribosomal subunit protein uS17A from Saccharomyces cerevisiae (strain ATCC 204508 / S288c) (Baker's yeast).